The primary structure comprises 74 residues: Peptide BmKb2 (74 aa).

A signal peptide spans 1–22; that stretch reads MEIKYLLTVFLVLLIVSDHCQA. K40 bears the Lysine amide mark. Positions 46-74 are excised as a propeptide; it reads DLNGQIDHFKNFRKRDAELEELLSKLPIY.

The protein belongs to the non-disulfide-bridged peptide (NDBP) superfamily. Short antimicrobial peptide (group 4) family.

The protein resides in the secreted. It localises to the target cell membrane. In terms of biological role, antibacterial peptide. This peptide gene is up-regulated at the transcriptional level after the venom gland is challenged by Gram-positive bacteria. This is Peptide BmKb2 from Olivierus martensii (Manchurian scorpion).